A 390-amino-acid polypeptide reads, in one-letter code: Dihydroorotase (390 aa).

His-54 and His-56 together coordinate Zn(2+). Residues 56–58 (HIR) and Asn-88 each bind substrate. Residues Lys-136, His-160, His-197, and Asp-259 each contribute to the Zn(2+) site. Lys-136 carries the post-translational modification N6-carboxylysine. Asp-259 is an active-site residue. Substrate-binding positions include His-263 and 277–278 (PG).

This sequence belongs to the metallo-dependent hydrolases superfamily. DHOase family. Class I DHOase subfamily. Zn(2+) is required as a cofactor.

The catalysed reaction is (S)-dihydroorotate + H2O = N-carbamoyl-L-aspartate + H(+). It participates in pyrimidine metabolism; UMP biosynthesis via de novo pathway; (S)-dihydroorotate from bicarbonate: step 3/3. Its function is as follows. Catalyzes the reversible cyclization of carbamoyl aspartate to dihydroorotate. The chain is Dihydroorotase from Saccharolobus solfataricus (strain ATCC 35092 / DSM 1617 / JCM 11322 / P2) (Sulfolobus solfataricus).